Reading from the N-terminus, the 662-residue chain is p-hydroxybenzoic acid efflux pump subunit AaeB (662 aa).

Transmembrane regions (helical) follow at residues 22-42, 52-72, 76-96, 102-122, 129-149, 161-181, 378-398, 415-435, 439-459, 467-487, and 491-511; these read FAFK…HLQL, AAIV…SGAI, GMLR…IIIA, VVML…SSLV, VFGL…GTPL, EIVL…PRSI, LFWL…IAVV, FLFG…FIMP, QSML…GLEV, LGAL…TFHI, and LDSA…ILLI.

It belongs to the aromatic acid exporter ArAE (TC 2.A.85) family.

The protein localises to the cell inner membrane. Forms an efflux pump with AaeA. Could function as a metabolic relief valve, allowing to eliminate certain compounds when they accumulate to high levels in the cell. This Pectobacterium carotovorum subsp. carotovorum (strain PC1) protein is p-hydroxybenzoic acid efflux pump subunit AaeB.